The primary structure comprises 459 residues: ATP-dependent protease ATPase subunit HslU (459 aa).

Residues V18, 60-65 (GVGKTE), D269, E337, and R409 each bind ATP.

Belongs to the ClpX chaperone family. HslU subfamily. A double ring-shaped homohexamer of HslV is capped on each side by a ring-shaped HslU homohexamer. The assembly of the HslU/HslV complex is dependent on binding of ATP.

It localises to the cytoplasm. Functionally, ATPase subunit of a proteasome-like degradation complex; this subunit has chaperone activity. The binding of ATP and its subsequent hydrolysis by HslU are essential for unfolding of protein substrates subsequently hydrolyzed by HslV. HslU recognizes the N-terminal part of its protein substrates and unfolds these before they are guided to HslV for hydrolysis. The polypeptide is ATP-dependent protease ATPase subunit HslU (Myxococcus xanthus (strain DK1622)).